Reading from the N-terminus, the 434-residue chain is Nicotinate phosphoribosyltransferase (434 aa).

At His242 the chain carries Phosphohistidine; by autocatalysis.

This sequence belongs to the NAPRTase family. Post-translationally, transiently phosphorylated on a His residue during the reaction cycle. Phosphorylation strongly increases the affinity for substrates and increases the rate of nicotinate D-ribonucleotide production. Dephosphorylation regenerates the low-affinity form of the enzyme, leading to product release.

It carries out the reaction nicotinate + 5-phospho-alpha-D-ribose 1-diphosphate + ATP + H2O = nicotinate beta-D-ribonucleotide + ADP + phosphate + diphosphate. Its pathway is cofactor biosynthesis; NAD(+) biosynthesis; nicotinate D-ribonucleotide from nicotinate: step 1/1. In terms of biological role, catalyzes the synthesis of beta-nicotinate D-ribonucleotide from nicotinate and 5-phospho-D-ribose 1-phosphate at the expense of ATP. This is Nicotinate phosphoribosyltransferase from Brucella anthropi (strain ATCC 49188 / DSM 6882 / CCUG 24695 / JCM 21032 / LMG 3331 / NBRC 15819 / NCTC 12168 / Alc 37) (Ochrobactrum anthropi).